Consider the following 66-residue polypeptide: Large ribosomal subunit protein bL31 (66 aa).

Zn(2+) contacts are provided by Cys16, Cys18, Cys36, and Cys39.

The protein belongs to the bacterial ribosomal protein bL31 family. Type A subfamily. In terms of assembly, part of the 50S ribosomal subunit. Zn(2+) serves as cofactor.

In terms of biological role, binds the 23S rRNA. In Clostridioides difficile (strain 630) (Peptoclostridium difficile), this protein is Large ribosomal subunit protein bL31.